Here is a 225-residue protein sequence, read N- to C-terminus: ATP-dependent Clp protease proteolytic subunit (225 aa).

The Nucleophile role is filled by Ser123. His148 is a catalytic residue.

Belongs to the peptidase S14 family. Fourteen ClpP subunits assemble into 2 heptameric rings which stack back to back to give a disk-like structure with a central cavity, resembling the structure of eukaryotic proteasomes.

It is found in the cytoplasm. It carries out the reaction Hydrolysis of proteins to small peptides in the presence of ATP and magnesium. alpha-casein is the usual test substrate. In the absence of ATP, only oligopeptides shorter than five residues are hydrolyzed (such as succinyl-Leu-Tyr-|-NHMec, and Leu-Tyr-Leu-|-Tyr-Trp, in which cleavage of the -Tyr-|-Leu- and -Tyr-|-Trp bonds also occurs).. Cleaves peptides in various proteins in a process that requires ATP hydrolysis. Has a chymotrypsin-like activity. Plays a major role in the degradation of misfolded proteins. This is ATP-dependent Clp protease proteolytic subunit from Chlorobium phaeovibrioides (strain DSM 265 / 1930) (Prosthecochloris vibrioformis (strain DSM 265)).